The chain runs to 168 residues: Ubiquitin-conjugating enzyme E2 7 (168 aa).

The disordered stretch occupies residues 1–21 (MATAPARRASSSRSSSEISRT). The UBC core domain maps to 6–166 (ARRASSSRSS…VRRAVRKSQE (161 aa)). Cys92 serves as the catalytic Glycyl thioester intermediate.

This sequence belongs to the ubiquitin-conjugating enzyme family.

The catalysed reaction is S-ubiquitinyl-[E1 ubiquitin-activating enzyme]-L-cysteine + [E2 ubiquitin-conjugating enzyme]-L-cysteine = [E1 ubiquitin-activating enzyme]-L-cysteine + S-ubiquitinyl-[E2 ubiquitin-conjugating enzyme]-L-cysteine.. It participates in protein modification; protein ubiquitination. Catalyzes the covalent attachment of ubiquitin to other proteins so as to signal them for selective protein degradation. Involved in the formation of multiubiquitin chains. The protein is Ubiquitin-conjugating enzyme E2 7 (UBC7) of Triticum aestivum (Wheat).